Here is a 342-residue protein sequence, read N- to C-terminus: Oxygen-dependent coproporphyrinogen-III oxidase (342 aa).

Position 98 (Ser98) interacts with substrate. The a divalent metal cation site is built by His102 and His112. His112 (proton donor) is an active-site residue. 114–116 (NYR) is a substrate binding site. A divalent metal cation is bound by residues His146 and His176. The tract at residues 266–301 (YVEFNLVWDRGTIFGLQTNGRTESILMSLPPLARWE) is important for dimerization.

Belongs to the aerobic coproporphyrinogen-III oxidase family. As to quaternary structure, homodimer. The cofactor is a divalent metal cation.

The protein localises to the cytoplasm. It carries out the reaction coproporphyrinogen III + O2 + 2 H(+) = protoporphyrinogen IX + 2 CO2 + 2 H2O. Its pathway is porphyrin-containing compound metabolism; protoporphyrin-IX biosynthesis; protoporphyrinogen-IX from coproporphyrinogen-III (O2 route): step 1/1. Its function is as follows. Involved in the heme and chlorophyll biosynthesis. Catalyzes the aerobic oxidative decarboxylation of propionate groups of rings A and B of coproporphyrinogen-III to yield the vinyl groups in protoporphyrinogen-IX. This chain is Oxygen-dependent coproporphyrinogen-III oxidase, found in Prochlorococcus marinus (strain MIT 9312).